The chain runs to 476 residues: MATAANQVGRITQVIGAVVDVQFEGHLPAILNAIETKNGENRLVLEVAQHLGESTVRTIAMDTTEGLVRGQDVTDTGAPIRVPVGAGTLGRIMNVIGEPVDEQGPVKADDLRPIHAEAPSYTDQSTEAEILVTGIKVVDLLAPYAKGGKIGLFGGAGVGKTVLIQELINNVAKAHGGYSVFAGVGERTREGNDLYHEFIESGVNKKGGGEGSKCALVYGQMNEPPGARARVALSGLTVAEHFRDQGQDVLFFVDNIFRFTQAGSEVSALLGRIPSAVGYQPTLATDMGALQERITTTNKGSITSVQAIYVPADDLTDPAPATSFAHLDATTVLNRAISEKGIYPAVDPLDSTSRMLSPLIVGEEHYQTARLVQQVLQRYKSLQDIIAILGMDELSEEDKLTVARARKVERFLSQPFHVAEVFTGSPGKFVDLADTIKGFRDLCQGKYDHLPEAAFYMVGTIEEAVEKGKKLAAEAA.

154-161 (GGAGVGKT) lines the ATP pocket.

Belongs to the ATPase alpha/beta chains family. F-type ATPases have 2 components, CF(1) - the catalytic core - and CF(0) - the membrane proton channel. CF(1) has five subunits: alpha(3), beta(3), gamma(1), delta(1), epsilon(1). CF(0) has three main subunits: a(1), b(2) and c(9-12). The alpha and beta chains form an alternating ring which encloses part of the gamma chain. CF(1) is attached to CF(0) by a central stalk formed by the gamma and epsilon chains, while a peripheral stalk is formed by the delta and b chains.

The protein localises to the cell inner membrane. The catalysed reaction is ATP + H2O + 4 H(+)(in) = ADP + phosphate + 5 H(+)(out). Functionally, produces ATP from ADP in the presence of a proton gradient across the membrane. The catalytic sites are hosted primarily by the beta subunits. This Nitrobacter winogradskyi (strain ATCC 25391 / DSM 10237 / CIP 104748 / NCIMB 11846 / Nb-255) protein is ATP synthase subunit beta.